A 248-amino-acid polypeptide reads, in one-letter code: MYKVVMIRHGESEWNKLNLFTGWTDVDLSDRGVEEAIWAGKKLKEEGYTFDVAFTSVLKRAIKTLNLVLEQMNLDWIPVYKHWRLNERHYGALQGLNKAEMTERYGEQQVLLWRRSYDVPPPPLEKTDPRWPGNDPRYALVPEDELPLCESLKDTEARVVPYWADMIVPAIKEGKKVLISAHGNSMRAIVKYLDKMSGEEIAKTNIPTGIPLVYELDESMRPIRHYYLADEDFLKAKEQEVANQIYKK.

Substrate is bound by residues 8 to 15, 21 to 22, R60, 87 to 90, K98, 114 to 115, and 183 to 184; these read RHGESEWN, TG, ERHY, RR, and GN. H9 (tele-phosphohistidine intermediate) is an active-site residue. E87 (proton donor/acceptor) is an active-site residue.

Belongs to the phosphoglycerate mutase family. BPG-dependent PGAM subfamily.

It carries out the reaction (2R)-2-phosphoglycerate = (2R)-3-phosphoglycerate. It functions in the pathway carbohydrate degradation; glycolysis; pyruvate from D-glyceraldehyde 3-phosphate: step 3/5. Its function is as follows. Catalyzes the interconversion of 2-phosphoglycerate and 3-phosphoglycerate. This chain is 2,3-bisphosphoglycerate-dependent phosphoglycerate mutase, found in Coprothermobacter proteolyticus (strain ATCC 35245 / DSM 5265 / OCM 4 / BT).